We begin with the raw amino-acid sequence, 314 residues long: Ribosomal protein L11 methyltransferase (314 aa).

4 residues coordinate S-adenosyl-L-methionine: T161, G182, D204, and N248.

It belongs to the methyltransferase superfamily. PrmA family.

The protein resides in the cytoplasm. It catalyses the reaction L-lysyl-[protein] + 3 S-adenosyl-L-methionine = N(6),N(6),N(6)-trimethyl-L-lysyl-[protein] + 3 S-adenosyl-L-homocysteine + 3 H(+). Methylates ribosomal protein L11. The protein is Ribosomal protein L11 methyltransferase of Listeria monocytogenes serotype 4b (strain CLIP80459).